Reading from the N-terminus, the 336-residue chain is Holliday junction branch migration complex subunit RuvB (336 aa).

A large ATPase domain (RuvB-L) region spans residues 4-184 (ADRLIQPQVQ…FGIPLRLEFY (181 aa)). ATP-binding positions include R24, G65, K68, T69, T70, 131–133 (EDY), R174, Y184, and R221. T69 lines the Mg(2+) pocket. Positions 185–255 (NVADLTTIVT…VAEYALDLLD (71 aa)) are small ATPAse domain (RuvB-S). The interval 258-336 (DQGFDYLDRK…HFSLVRPEKA (79 aa)) is head domain (RuvB-H). Residues R294, R313, and R318 each contribute to the DNA site.

Belongs to the RuvB family. In terms of assembly, homohexamer. Forms an RuvA(8)-RuvB(12)-Holliday junction (HJ) complex. HJ DNA is sandwiched between 2 RuvA tetramers; dsDNA enters through RuvA and exits via RuvB. An RuvB hexamer assembles on each DNA strand where it exits the tetramer. Each RuvB hexamer is contacted by two RuvA subunits (via domain III) on 2 adjacent RuvB subunits; this complex drives branch migration. In the full resolvosome a probable DNA-RuvA(4)-RuvB(12)-RuvC(2) complex forms which resolves the HJ.

The protein resides in the cytoplasm. It carries out the reaction ATP + H2O = ADP + phosphate + H(+). Its function is as follows. The RuvA-RuvB-RuvC complex processes Holliday junction (HJ) DNA during genetic recombination and DNA repair, while the RuvA-RuvB complex plays an important role in the rescue of blocked DNA replication forks via replication fork reversal (RFR). RuvA specifically binds to HJ cruciform DNA, conferring on it an open structure. The RuvB hexamer acts as an ATP-dependent pump, pulling dsDNA into and through the RuvAB complex. RuvB forms 2 homohexamers on either side of HJ DNA bound by 1 or 2 RuvA tetramers; 4 subunits per hexamer contact DNA at a time. Coordinated motions by a converter formed by DNA-disengaged RuvB subunits stimulates ATP hydrolysis and nucleotide exchange. Immobilization of the converter enables RuvB to convert the ATP-contained energy into a lever motion, pulling 2 nucleotides of DNA out of the RuvA tetramer per ATP hydrolyzed, thus driving DNA branch migration. The RuvB motors rotate together with the DNA substrate, which together with the progressing nucleotide cycle form the mechanistic basis for DNA recombination by continuous HJ branch migration. Branch migration allows RuvC to scan DNA until it finds its consensus sequence, where it cleaves and resolves cruciform DNA. This chain is Holliday junction branch migration complex subunit RuvB, found in Shewanella frigidimarina (strain NCIMB 400).